Consider the following 117-residue polypeptide: Large ribosomal subunit protein bL20 (117 aa).

It belongs to the bacterial ribosomal protein bL20 family.

In terms of biological role, binds directly to 23S ribosomal RNA and is necessary for the in vitro assembly process of the 50S ribosomal subunit. It is not involved in the protein synthesizing functions of that subunit. The polypeptide is Large ribosomal subunit protein bL20 (Gloeothece citriformis (strain PCC 7424) (Cyanothece sp. (strain PCC 7424))).